Here is a 192-residue protein sequence, read N- to C-terminus: Adenylate kinase (192 aa).

10-18 contributes to the ATP binding site; sequence GVPGVGKTT.

Belongs to the archaeal adenylate kinase family.

It is found in the cytoplasm. The catalysed reaction is AMP + ATP = 2 ADP. The polypeptide is Adenylate kinase (Methanoculleus marisnigri (strain ATCC 35101 / DSM 1498 / JR1)).